The primary structure comprises 261 residues: Expansin-B2 (261 aa).

Positions 1-24 are cleaved as a signal peptide; the sequence is MAGASAKVVAMLLSVLATYGFAAG. An Expansin-like EG45 domain is found at 51–157; the sequence is GGACGFKNTN…RRVPCYHRGL (107 aa). 3 disulfide bridges follow: cysteine 54/cysteine 82, cysteine 85/cysteine 152, and cysteine 90/cysteine 96. An Expansin-like CBD domain is found at 170–256; the sequence is VYLAVLVEFA…NWRANTNYGS (87 aa).

The protein belongs to the expansin family. Expansin B subfamily. As to expression, expressed in roots.

The protein resides in the secreted. It is found in the cell wall. Its subcellular location is the membrane. In terms of biological role, may cause loosening and extension of plant cell walls by disrupting non-covalent bonding between cellulose microfibrils and matrix glucans. No enzymatic activity has been found. May be required for rapid internodal elongation in deepwater rice during submergence. This Oryza sativa subsp. japonica (Rice) protein is Expansin-B2 (EXPB2).